A 165-amino-acid chain; its full sequence is MKFKLNFHEKINQKDCWQSLIDHKERSYSLDFVNNTEKELPLIYGYEVKDFENHGVKIGYTTCKPSDKIQSAIEERILSQEKEFRFLDENIEKIEEVKVIFWAIAINEKDESFKDYSLHSFIKEKNLLKESQAGGEWFIVDENKDKFEYLSQIFRQFRAPSLFKK.

In terms of biological role, corresponds to the N-terminus of a putative G subtype type II restriction/methylase subunit. The sequence is that of Putative type II restriction enzyme and methyltransferase RM.MpnORF109P N-terminus from Mycoplasma pneumoniae (strain ATCC 29342 / M129 / Subtype 1) (Mycoplasmoides pneumoniae).